Here is a 67-residue protein sequence, read N- to C-terminus: Prokaryotic ubiquitin-like protein Pup (67 aa).

The disordered stretch occupies residues 1-26 (MATKETGGQKHATRRNQEVEEIEVTT). Residues 23-61 (EVTTETSVRNEKLAEDVDDILDEIDEVLESNAEDFVRQF) are ARC ATPase binding. A coiled-coil region spans residues 27-55 (ETSVRNEKLAEDVDDILDEIDEVLESNAE). Residue Glu-67 forms an Isoglutamyl lysine isopeptide (Glu-Lys) (interchain with K-? in acceptor proteins) linkage.

It belongs to the prokaryotic ubiquitin-like protein family. In terms of assembly, strongly interacts with the proteasome-associated ATPase ARC through a hydrophobic interface; the interacting region of Pup lies in its C-terminal half. There is one Pup binding site per ARC hexamer ring.

It participates in protein degradation; proteasomal Pup-dependent pathway. Functionally, protein modifier that is covalently attached to lysine residues of substrate proteins, thereby targeting them for proteasomal degradation. The tagging system is termed pupylation. The polypeptide is Prokaryotic ubiquitin-like protein Pup (Thermobifida fusca (strain YX)).